We begin with the raw amino-acid sequence, 203 residues long: Urease accessory protein UreE (203 aa).

A disordered region spans residues 170 to 203; it reads EHHGHSHSHSHSHSHDHDHQHGPSCSHGHHHGHR.

It belongs to the UreE family.

The protein resides in the cytoplasm. Its function is as follows. Involved in urease metallocenter assembly. Binds nickel. Probably functions as a nickel donor during metallocenter assembly. The chain is Urease accessory protein UreE from Burkholderia mallei (strain SAVP1).